The sequence spans 30 residues: MSILPVIFLPIFFYSSFVQTFNASECIDKG.

The signal sequence occupies residues 1 to 18; that stretch reads MSILPVIFLPIFFYSSFV.

Belongs to the interleukin-1 receptor family.

This chain is Truncated interleukin-1-binding protein, found in Vaccinia virus (strain Copenhagen) (VACV).